The following is a 94-amino-acid chain: Co-chaperonin GroES (94 aa).

The protein belongs to the GroES chaperonin family. Heptamer of 7 subunits arranged in a ring. Interacts with the chaperonin GroEL.

The protein resides in the cytoplasm. Its function is as follows. Together with the chaperonin GroEL, plays an essential role in assisting protein folding. The GroEL-GroES system forms a nano-cage that allows encapsulation of the non-native substrate proteins and provides a physical environment optimized to promote and accelerate protein folding. GroES binds to the apical surface of the GroEL ring, thereby capping the opening of the GroEL channel. This chain is Co-chaperonin GroES, found in Exiguobacterium sibiricum (strain DSM 17290 / CCUG 55495 / CIP 109462 / JCM 13490 / 255-15).